The sequence spans 906 residues: DNA mismatch repair protein MutS (906 aa).

656-663 serves as a coordination point for ATP; that stretch reads GPNMAGKS.

Belongs to the DNA mismatch repair MutS family.

This protein is involved in the repair of mismatches in DNA. It is possible that it carries out the mismatch recognition step. This protein has a weak ATPase activity. The protein is DNA mismatch repair protein MutS of Rhodopseudomonas palustris (strain BisA53).